The primary structure comprises 857 residues: KH domain-containing protein HEN4 (857 aa).

Residues 1–15 (MERNSVKFHAEKRSG) are compositionally biased toward basic and acidic residues. Positions 1–27 (MERNSVKFHAEKRSGAFDPGSGFGSSK) are disordered. KH domains are found at residues 46 to 110 (HAAF…KLGA), 149 to 217 (TVVC…LVSI), 451 to 521 (DVVF…IMLI), and 541 to 610 (SITA…IFHI). The tract at residues 644-755 (SDNPLSIGSH…RGLSDASGGL (112 aa)) is disordered. 2 stretches are compositionally biased toward polar residues: residues 645–665 (DNPLSIGSHQSVSNPATNSSS) and 673–688 (SFLSGSHSSVNYSRSV). The span at 718 to 730 (FTMDHSDNSHHLT) shows a compositional bias: basic and acidic residues. The segment covering 746 to 755 (RGLSDASGGL) has biased composition (low complexity). A KH 5 domain is found at 775-839 (NTTVEIRVPA…DQTQAAQNLL (65 aa)).

Interacts with HUA1. Interacts with FLK and PEP.

The protein resides in the nucleus speckle. In terms of biological role, functions in floral reproductive organ identity in the third whorl and floral determinacy specification by specifically promoting the processing of AGAMOUS (AG) pre-mRNA. Functions in association with HUA1 and HUA2. The protein is KH domain-containing protein HEN4 of Arabidopsis thaliana (Mouse-ear cress).